Reading from the N-terminus, the 494-residue chain is Keratin, type I cytoskeletal 12 (494 aa).

Polar residues predominate over residues 1–12 (MDLSNNTMSLSV). The interval 1-32 (MDLSNNTMSLSVRTPGLSRRLSSQSVIGRPRG) is disordered. The tract at residues 1–124 (MDLSNNTMSL…GNDGGLLSGS (124 aa)) is head. The tract at residues 125-160 (EKETMQNLNDRLASYLDKVRALEEANTELENKIREW) is coil 1A. The IF rod domain occupies 125-440 (EKETMQNLND…RLLDGEAQGD (316 aa)). Residues 164–182 (RGTGTADASQSDYSKYYPL) form a linker 1 region. Positions 183–274 (IEDLRNKIIS…KNHEDELQSF (92 aa)) are coil 1B. Residues 275–297 (RVGGPGEVSVEMDAAPGVDLTRL) are linker 12. Positions 298 to 435 (LNDMRAQYET…IETYRRLLDG (138 aa)) are coil 2. The segment at 436–494 (EAQGDGLEESLFVTDSKSQAQSTDSSKDPTKTRKIKTVVQEMVNGEVVSSQVQEIEELM) is tail. The interval 446–468 (LFVTDSKSQAQSTDSSKDPTKTR) is disordered. Positions 448–459 (VTDSKSQAQSTD) are enriched in polar residues.

It belongs to the intermediate filament family. Heterotetramer of two type I and two type II keratins. Keratin-3 associates with keratin-12. As to expression, expressed in the corneal epithelium (at protein level).

Involved in corneal epithelium organization, integrity and corneal keratin expression. This chain is Keratin, type I cytoskeletal 12 (KRT12), found in Homo sapiens (Human).